The sequence spans 233 residues: Transcriptional regulatory protein NatR (233 aa).

The 115-residue stretch at Lys3–Leu117 folds into the Response regulatory domain. 4-aspartylphosphate is present on Asp54. The HTH LytTR-type domain occupies Ile129 to Phe233.

In terms of processing, phosphorylated by NatK.

The protein localises to the cytoplasm. Its function is as follows. Member of the two-component regulatory system NatK/NatR that positively regulates the expression of the natAB operon. Acts by binding directly to the promoter of natAB. This is Transcriptional regulatory protein NatR from Bacillus subtilis (strain 168).